Reading from the N-terminus, the 145-residue chain is Ponticulin-like protein B (145 aa).

Residues 1-22 (MLFIKSLLLLLSLIFAVSNATG) form the signal peptide. An N-linked (GlcNAc...) asparagine glycan is attached at Asn-34. The tract at residues 107–126 (DTTSSSTSPSSTSPSSTSPA) is disordered. A compositionally biased stretch (low complexity) spans 108-126 (TTSSSTSPSSTSPSSTSPA). The GPI-like-anchor amidated serine moiety is linked to residue Ser-117. The propeptide at 118-145 (TSPSSTSPASTLIGSIAFVTLAALFALI) is removed in mature form.

It belongs to the ponticulin family. Post-translationally, the GPI-like-anchor contains a phosphoceramide group, rather than a phosphatidyl group.

The protein resides in the cell membrane. Its function is as follows. Binds F-actin and nucleates actin assembly. The polypeptide is Ponticulin-like protein B (ponB) (Dictyostelium discoideum (Social amoeba)).